A 395-amino-acid chain; its full sequence is Dual specificity mitogen-activated protein kinase kinase 1 (395 aa).

Residues 1 to 24 form a disordered region; the sequence is MPKKKPTPIQLNPNPEGTAVNGTP. The segment covering 9–24 has biased composition (polar residues); that stretch reads IQLNPNPEGTAVNGTP. The Protein kinase domain occupies 68–363; the sequence is FEKVSELGAG…LKQLMVHSFI (296 aa). ATP is bound by residues 74–82 and Lys-97; that span reads LGAGNGGVV. The active-site Proton acceptor is the Asp-190. A phosphoserine; by RAF mark is found at Ser-218 and Ser-222. The segment at 284–305 is disordered; sequence ASSELAPRPRPPGRPISSYGPD.

This sequence belongs to the protein kinase superfamily. STE Ser/Thr protein kinase family. MAP kinase kinase subfamily. Activated by phosphorylation on Ser/Thr catalyzed by MAP kinase kinase kinases (RAF or MOS). In terms of tissue distribution, expressed in the central nervous system, kidney, liver, intestine and the hematopoietic system.

The protein resides in the cytoplasm. It localises to the cytoskeleton. The protein localises to the microtubule organizing center. Its subcellular location is the centrosome. It is found in the spindle pole body. The protein resides in the nucleus. It carries out the reaction L-seryl-[protein] + ATP = O-phospho-L-seryl-[protein] + ADP + H(+). The enzyme catalyses L-threonyl-[protein] + ATP = O-phospho-L-threonyl-[protein] + ADP + H(+). The catalysed reaction is L-tyrosyl-[protein] + ATP = O-phospho-L-tyrosyl-[protein] + ADP + H(+). Functionally, dual specificity protein kinase which acts as an essential component of the MAP kinase signal transduction pathway. Binding of extracellular ligands such as growth factors, cytokines and hormones to their cell-surface receptors activates the MAPK/ERK cascade, ultimately leading to phosphorylation of a threonine and a tyrosine residue in a Thr-Glu-Tyr sequence located in MAP kinases. Depending on the cellular context, this pathway mediates diverse biological functions such as cell growth, adhesion, survival and differentiation predominantly through the regulation of transcription, metabolism and cytoskeletal rearrangements. The chain is Dual specificity mitogen-activated protein kinase kinase 1 (map2k1) from Xenopus laevis (African clawed frog).